A 574-amino-acid polypeptide reads, in one-letter code: Efflux pump FUB11 (574 aa).

The disordered stretch occupies residues 1-44; the sequence is MAIDPQPSSPSLSSETIANDTIGNDNNVNEPSVEPKTQEHQHTV. The span at 9–30 shows a compositional bias: polar residues; sequence SPSLSSETIANDTIGNDNNVNE. Asn-19 carries an N-linked (GlcNAc...) asparagine glycan. Helical transmembrane passes span 116 to 136, 148 to 168, 176 to 196, 208 to 228, 235 to 255, 318 to 338, 348 to 368, 394 to 414, 419 to 439, 449 to 469, and 484 to 504; these read VATLGISLYVLGFTFGPLIWA, FFFTFMVATAFSAGAAGAGSI, FLTGSIGSAPLSNAPALIADM, MFSGAPFLGPAIGPIAGGFLG, WLHGLMAAFTGVTWIACTVFI, IYISIIYGTMYMCFAAFPIVF, IGGLAFTGIVIGVILSIISFA, AIMGSLLIPIGLFWFAWTTFA, IVPIIGTVFFAWGLVLVFMAL, IFAASIMAANSALRSLFGAAF, and WASSIPAFLALACVPFPFLFY. Positions 552–574 are disordered; it reads HNSHTSATHSHGHRRSLSCTRSV.

Belongs to the major facilitator superfamily. DHA1 family. Polyamines/proton antiporter (TC 2.A.1.2.16) subfamily.

It localises to the cell membrane. Functionally, efflux pump involved in export of fusaric acid, a mycotoxin with low to moderate toxicity to animals and humans, but with high phytotoxic properties. Constitutes a self-protecting mechanism of the fungus against critical levels of fusaric acid within the cell. The protein is Efflux pump FUB11 of Gibberella fujikuroi (strain CBS 195.34 / IMI 58289 / NRRL A-6831) (Bakanae and foot rot disease fungus).